A 95-amino-acid polypeptide reads, in one-letter code: METGTEKRVSARITGRVQGVGFRNFTRRRARRLDVTGWVRNESDGSVRLEAEGPTDALESLIEAVHEGPRTARVETVDVDWSDAADAFEGFRVRR.

Residues 8-95 enclose the Acylphosphatase-like domain; it reads RVSARITGRV…DAFEGFRVRR (88 aa). Catalysis depends on residues Arg23 and Asn41.

It belongs to the acylphosphatase family.

It catalyses the reaction an acyl phosphate + H2O = a carboxylate + phosphate + H(+). The sequence is that of Acylphosphatase (acyP) from Salinibacter ruber (strain DSM 13855 / M31).